The chain runs to 570 residues: Putative diflavin flavoprotein A 6 (570 aa).

The interval 38–231 (AKGTTANSYL…FPTRLYATGH (194 aa)) is zinc metallo-hydrolase. The region spanning 260–402 (VALIYASAYG…AGTDFAQALK (143 aa)) is the Flavodoxin-like domain. Residues 421–570 (VGRIVGSLCV…VHHRKSGNHY (150 aa)) form a flavodoxin-reductase-like region.

It in the N-terminal section; belongs to the zinc metallo-hydrolase group 3 family. This sequence in the C-terminal section; belongs to the flavodoxin reductase family. Fe cation is required as a cofactor.

Functionally, mediates electron transfer from NADH to oxygen, reducing it to water. This modular protein has 3 redox cofactors, in other organisms the same activity requires 2 or 3 proteins. In Nostoc sp. (strain PCC 7120 / SAG 25.82 / UTEX 2576), this protein is Putative diflavin flavoprotein A 6 (dfa6).